The sequence spans 338 residues: Anthranilate phosphoribosyltransferase (338 aa).

Residues G81, 84–85 (GD), S89, 91–94 (NVST), 109–117 (KHGNRALSS), and A121 each bind 5-phospho-alpha-D-ribose 1-diphosphate. Position 81 (G81) interacts with anthranilate. S93 is a binding site for Mg(2+). Residue N112 participates in anthranilate binding. Residue R167 participates in anthranilate binding. Residues D226 and E227 each contribute to the Mg(2+) site.

Belongs to the anthranilate phosphoribosyltransferase family. In terms of assembly, homodimer. Requires Mg(2+) as cofactor.

It carries out the reaction N-(5-phospho-beta-D-ribosyl)anthranilate + diphosphate = 5-phospho-alpha-D-ribose 1-diphosphate + anthranilate. It functions in the pathway amino-acid biosynthesis; L-tryptophan biosynthesis; L-tryptophan from chorismate: step 2/5. Functionally, catalyzes the transfer of the phosphoribosyl group of 5-phosphorylribose-1-pyrophosphate (PRPP) to anthranilate to yield N-(5'-phosphoribosyl)-anthranilate (PRA). The polypeptide is Anthranilate phosphoribosyltransferase (Rhodopseudomonas palustris (strain TIE-1)).